We begin with the raw amino-acid sequence, 372 residues long: N-methyl-L-tryptophan oxidase (372 aa).

Position 4–34 (4–34) interacts with FAD; it reads DLIIIGSGSVGAAAGYYATRAGLNVLMTDAH. C308 is subject to S-8alpha-FAD cysteine.

It belongs to the MSOX/MTOX family. MTOX subfamily. Monomer. The cofactor is FAD.

It catalyses the reaction N(alpha)-methyl-L-tryptophan + O2 + H2O = L-tryptophan + formaldehyde + H2O2. Functionally, catalyzes the oxidative demethylation of N-methyl-L-tryptophan. The polypeptide is N-methyl-L-tryptophan oxidase (Escherichia coli O17:K52:H18 (strain UMN026 / ExPEC)).